The chain runs to 252 residues: 3-dehydroquinate dehydratase (252 aa).

3-dehydroquinate contacts are provided by residues S21, 46-48 (EWR), and R82. The Proton donor/acceptor role is filled by H143. Residue K170 is the Schiff-base intermediate with substrate of the active site. 3-dehydroquinate is bound by residues R213, S232, and Q236.

This sequence belongs to the type-I 3-dehydroquinase family. Homodimer.

The enzyme catalyses 3-dehydroquinate = 3-dehydroshikimate + H2O. Its pathway is metabolic intermediate biosynthesis; chorismate biosynthesis; chorismate from D-erythrose 4-phosphate and phosphoenolpyruvate: step 3/7. Its function is as follows. Involved in the third step of the chorismate pathway, which leads to the biosynthesis of aromatic amino acids. Catalyzes the cis-dehydration of 3-dehydroquinate (DHQ) and introduces the first double bond of the aromatic ring to yield 3-dehydroshikimate. This Escherichia coli O7:K1 (strain IAI39 / ExPEC) protein is 3-dehydroquinate dehydratase.